Reading from the N-terminus, the 701-residue chain is Glycine--tRNA ligase beta subunit (701 aa).

This sequence belongs to the class-II aminoacyl-tRNA synthetase family. As to quaternary structure, tetramer of two alpha and two beta subunits.

The protein resides in the cytoplasm. The enzyme catalyses tRNA(Gly) + glycine + ATP = glycyl-tRNA(Gly) + AMP + diphosphate. The chain is Glycine--tRNA ligase beta subunit from Anaeromyxobacter sp. (strain K).